Consider the following 335-residue polypeptide: Glyoxylate reductase (335 aa).

Residues 159-162 (MGRI), 181-183 (SRS), and 240-242 (TGR) contribute to the NADP(+) site. Residues R242 and E271 contribute to the active site. H290 functions as the Proton donor in the catalytic mechanism. 290 to 292 (HAA) serves as a coordination point for NADP(+).

Belongs to the D-isomer specific 2-hydroxyacid dehydrogenase family. GyaR subfamily. In terms of assembly, homodimer.

It is found in the cytoplasm. The enzyme catalyses glycolate + NAD(+) = glyoxylate + NADH + H(+). The protein is Glyoxylate reductase of Aeropyrum pernix (strain ATCC 700893 / DSM 11879 / JCM 9820 / NBRC 100138 / K1).